The following is a 579-amino-acid chain: Isocitrate dehydrogenase kinase/phosphatase (579 aa).

Residues 324–330 (ADGTPGM) and Lys-345 each bind ATP. Asp-380 is a catalytic residue.

The protein belongs to the AceK family.

It localises to the cytoplasm. The enzyme catalyses L-seryl-[isocitrate dehydrogenase] + ATP = O-phospho-L-seryl-[isocitrate dehydrogenase] + ADP + H(+). Functionally, bifunctional enzyme which can phosphorylate or dephosphorylate isocitrate dehydrogenase (IDH) on a specific serine residue. This is a regulatory mechanism which enables bacteria to bypass the Krebs cycle via the glyoxylate shunt in response to the source of carbon. When bacteria are grown on glucose, IDH is fully active and unphosphorylated, but when grown on acetate or ethanol, the activity of IDH declines drastically concomitant with its phosphorylation. In Xanthomonas euvesicatoria pv. vesicatoria (strain 85-10) (Xanthomonas campestris pv. vesicatoria), this protein is Isocitrate dehydrogenase kinase/phosphatase.